Consider the following 274-residue polypeptide: Undecaprenyl-diphosphatase (274 aa).

A run of 8 helical transmembrane segments spans residues 1-21, 48-68, 84-104, 108-128, 143-163, 187-207, 214-234, and 254-274; these read MDWFYAIIYGIVEGITEFLPI, VVIQGGAILAVLAYYWRDFAG, LGVIVGVIPAVVLGVLFGDVI, LFRPSVVAWALIVGGVLMWVI, IGLGRAFLIGAAQCLALLWPG, FSFYLGIPTLGGAALLDFIKS, IGLLNVFLGAAVSFVVAYLAI, and VIFGLLILLLVASGRLANGGL.

It belongs to the UppP family.

It localises to the cell membrane. It catalyses the reaction di-trans,octa-cis-undecaprenyl diphosphate + H2O = di-trans,octa-cis-undecaprenyl phosphate + phosphate + H(+). In terms of biological role, catalyzes the dephosphorylation of undecaprenyl diphosphate (UPP). Confers resistance to bacitracin. In Deinococcus geothermalis (strain DSM 11300 / CIP 105573 / AG-3a), this protein is Undecaprenyl-diphosphatase.